We begin with the raw amino-acid sequence, 307 residues long: Chaperone protein DnaJ 2 (307 aa).

The J domain occupies 6-71 (NYYQILGVPR…TKRRELDSRL (66 aa)). The tract at residues 69-133 (SRLFGRFRRP…TRRTKVVSPA (65 aa)) is disordered. The span at 88-99 (NGGRSPNGTSVN) shows a compositional bias: polar residues. A compositionally biased stretch (low complexity) spans 100 to 114 (GQVRTPTGRTGTRQP).

The protein belongs to the DnaJ family. In terms of assembly, homodimer. Zn(2+) serves as cofactor.

The protein localises to the cytoplasm. In terms of biological role, participates actively in the response to hyperosmotic and heat shock by preventing the aggregation of stress-denatured proteins and by disaggregating proteins, also in an autonomous, DnaK-independent fashion. Unfolded proteins bind initially to DnaJ; upon interaction with the DnaJ-bound protein, DnaK hydrolyzes its bound ATP, resulting in the formation of a stable complex. GrpE releases ADP from DnaK; ATP binding to DnaK triggers the release of the substrate protein, thus completing the reaction cycle. Several rounds of ATP-dependent interactions between DnaJ, DnaK and GrpE are required for fully efficient folding. Also involved, together with DnaK and GrpE, in the DNA replication of plasmids through activation of initiation proteins. This chain is Chaperone protein DnaJ 2 (dnaJ2), found in Synechocystis sp. (strain ATCC 27184 / PCC 6803 / Kazusa).